Here is a 192-residue protein sequence, read N- to C-terminus: Ion-translocating oxidoreductase complex subunit A (192 aa).

6 helical membrane passes run 5 to 25 (LLLL…FLGL), 39 to 59 (IGMS…SYLV), 65 to 85 (LPFD…AVVV), 102 to 122 (ALGI…VALL), 134 to 154 (AIFG…FSAM), and 171 to 191 (AIAM…TGLV).

It belongs to the NqrDE/RnfAE family. As to quaternary structure, the complex is composed of six subunits: RnfA, RnfB, RnfC, RnfD, RnfE and RnfG.

It is found in the cell inner membrane. Its function is as follows. Part of a membrane-bound complex that couples electron transfer with translocation of ions across the membrane. The protein is Ion-translocating oxidoreductase complex subunit A of Shewanella piezotolerans (strain WP3 / JCM 13877).